A 431-amino-acid chain; its full sequence is Ornithine aminotransferase, mitochondrial (431 aa).

Position 286 is an N6-(pyridoxal phosphate)lysine (K286).

This sequence belongs to the class-III pyridoxal-phosphate-dependent aminotransferase family. As to quaternary structure, homotetramer. It depends on pyridoxal 5'-phosphate as a cofactor.

The protein resides in the mitochondrion matrix. It catalyses the reaction a 2-oxocarboxylate + L-ornithine = L-glutamate 5-semialdehyde + an L-alpha-amino acid. Its pathway is amino-acid biosynthesis; L-proline biosynthesis; L-glutamate 5-semialdehyde from L-ornithine: step 1/1. The chain is Ornithine aminotransferase, mitochondrial (Oat) from Drosophila melanogaster (Fruit fly).